The sequence spans 425 residues: Enolase (425 aa).

Q162 serves as a coordination point for (2R)-2-phosphoglycerate. E204 functions as the Proton donor in the catalytic mechanism. Mg(2+) contacts are provided by D241, E288, and D315. (2R)-2-phosphoglycerate is bound by residues K340, R369, S370, and K391. The active-site Proton acceptor is K340.

It belongs to the enolase family. Requires Mg(2+) as cofactor.

It is found in the cytoplasm. It localises to the secreted. The protein resides in the cell surface. The enzyme catalyses (2R)-2-phosphoglycerate = phosphoenolpyruvate + H2O. Its pathway is carbohydrate degradation; glycolysis; pyruvate from D-glyceraldehyde 3-phosphate: step 4/5. In terms of biological role, catalyzes the reversible conversion of 2-phosphoglycerate (2-PG) into phosphoenolpyruvate (PEP). It is essential for the degradation of carbohydrates via glycolysis. The protein is Enolase of Porphyromonas gingivalis (strain ATCC 33277 / DSM 20709 / CIP 103683 / JCM 12257 / NCTC 11834 / 2561).